We begin with the raw amino-acid sequence, 430 residues long: Probable sugar isomerase mlr5709 (430 aa).

Mn(2+)-binding residues include H257, D289, and D291.

Belongs to the rhamnose isomerase family. Requires Mn(2+) as cofactor.

This chain is Probable sugar isomerase mlr5709, found in Mesorhizobium japonicum (strain LMG 29417 / CECT 9101 / MAFF 303099) (Mesorhizobium loti (strain MAFF 303099)).